The primary structure comprises 171 residues: MTRQPRVGVIMGSDSDWSVMQDAAHALAEFDIPIEVRVVSAHRTPAEMFDYARNAVDRSIAVIIAGAGGAAHLPGMVASATPLPVIGVPVPLARLDGLDSLLSIVQMPAGVPVATVSIGGARNAGLLAVRILGSSDLQLRAQLVAFQDRLADTVRAKDADLQRFRGKLIGD.

3 residues coordinate substrate: serine 13, aspartate 16, and arginine 43.

It belongs to the AIR carboxylase family. Class I subfamily.

The enzyme catalyses 5-carboxyamino-1-(5-phospho-D-ribosyl)imidazole + H(+) = 5-amino-1-(5-phospho-D-ribosyl)imidazole-4-carboxylate. It functions in the pathway purine metabolism; IMP biosynthesis via de novo pathway; 5-amino-1-(5-phospho-D-ribosyl)imidazole-4-carboxylate from 5-amino-1-(5-phospho-D-ribosyl)imidazole (N5-CAIR route): step 2/2. Functionally, catalyzes the conversion of N5-carboxyaminoimidazole ribonucleotide (N5-CAIR) to 4-carboxy-5-aminoimidazole ribonucleotide (CAIR). The polypeptide is N5-carboxyaminoimidazole ribonucleotide mutase (Mycobacterium leprae (strain TN)).